We begin with the raw amino-acid sequence, 262 residues long: Electron transfer flavoprotein beta subunit lysine methyltransferase (262 aa).

The N-terminal 38 residues, 1 to 38 (MALSLGWKAHRNHCGLLLQALRSSGLLLFPCGQCPWRG), are a transit peptide targeting the mitochondrion.

Belongs to the methyltransferase superfamily. ETFBKMT family. Interacts with HSPD1; this protein may possibly be a methylation substrate.

The protein localises to the cytoplasm. Its subcellular location is the mitochondrion matrix. It carries out the reaction L-lysyl-[protein] + 3 S-adenosyl-L-methionine = N(6),N(6),N(6)-trimethyl-L-lysyl-[protein] + 3 S-adenosyl-L-homocysteine + 3 H(+). In terms of biological role, protein-lysine methyltransferase that selectively trimethylates the flavoprotein ETFB in mitochondria. Thereby, may negatively regulate the function of ETFB in electron transfer from Acyl-CoA dehydrogenases to the main respiratory chain. The polypeptide is Electron transfer flavoprotein beta subunit lysine methyltransferase (Homo sapiens (Human)).